A 209-amino-acid polypeptide reads, in one-letter code: 2,3-bisphosphoglycerate-dependent phosphoglycerate mutase (209 aa).

Residues Arg-8–Asn-15, Thr-21–Gly-22, Arg-60, Glu-87–Tyr-90, Lys-98, Arg-114–Arg-115, and Gly-158–Asn-159 contribute to the substrate site. Catalysis depends on His-9, which acts as the Tele-phosphohistidine intermediate. Residue Glu-87 is the Proton donor/acceptor of the active site.

It belongs to the phosphoglycerate mutase family. BPG-dependent PGAM subfamily. As to quaternary structure, homodimer.

The catalysed reaction is (2R)-2-phosphoglycerate = (2R)-3-phosphoglycerate. It functions in the pathway carbohydrate degradation; glycolysis; pyruvate from D-glyceraldehyde 3-phosphate: step 3/5. Its function is as follows. Catalyzes the interconversion of 2-phosphoglycerate and 3-phosphoglycerate. This is 2,3-bisphosphoglycerate-dependent phosphoglycerate mutase from Rhizobium etli (strain ATCC 51251 / DSM 11541 / JCM 21823 / NBRC 15573 / CFN 42).